A 128-amino-acid polypeptide reads, in one-letter code: Cytochrome c-type biogenesis protein CcmE (128 aa).

The Cytoplasmic segment spans residues 1-8 (MQKRVRNR). The helical; Signal-anchor for type II membrane protein transmembrane segment at 9–29 (LITIIICFCSAFLGIGIILYN) threads the bilayer. Residues 30–128 (LENNIVFFLP…KHDENYRPTR (99 aa)) lie on the Periplasmic side of the membrane. The heme site is built by His-120 and Tyr-124.

Belongs to the CcmE/CycJ family.

Its subcellular location is the cell inner membrane. Heme chaperone required for the biogenesis of c-type cytochromes. Transiently binds heme delivered by CcmC and transfers the heme to apo-cytochromes in a process facilitated by CcmF and CcmH. The chain is Cytochrome c-type biogenesis protein CcmE from Rickettsia canadensis (strain McKiel).